Consider the following 233-residue polypeptide: ATP-dependent Clp protease proteolytic subunit 1 (233 aa).

Catalysis depends on S136, which acts as the Nucleophile. The active site involves H161.

This sequence belongs to the peptidase S14 family. As to quaternary structure, fourteen ClpP subunits assemble into 2 heptameric rings which stack back to back to give a disk-like structure with a central cavity, resembling the structure of eukaryotic proteasomes.

The protein resides in the cytoplasm. It catalyses the reaction Hydrolysis of proteins to small peptides in the presence of ATP and magnesium. alpha-casein is the usual test substrate. In the absence of ATP, only oligopeptides shorter than five residues are hydrolyzed (such as succinyl-Leu-Tyr-|-NHMec, and Leu-Tyr-Leu-|-Tyr-Trp, in which cleavage of the -Tyr-|-Leu- and -Tyr-|-Trp bonds also occurs).. Functionally, cleaves peptides in various proteins in a process that requires ATP hydrolysis. Has a chymotrypsin-like activity. Plays a major role in the degradation of misfolded proteins. This is ATP-dependent Clp protease proteolytic subunit 1 from Bifidobacterium longum (strain NCC 2705).